Consider the following 117-residue polypeptide: Probable glycerol dehydratase-reactivating factor small subunit (117 aa).

Glutamate 31 is a Mg(2+) binding site.

The protein belongs to the DdrB/PduH family. In terms of assembly, member of the GDR complex, probably composed of DhaF(2)/DhaG(2). Mg(2+) serves as cofactor.

Small subunit of the glycerol dehydratase-reactivating factor (GDR), which reactivates suicidally inhibited adenosylcobalamin-dependent glycerol dehydratase. The protein is Probable glycerol dehydratase-reactivating factor small subunit of Citrobacter freundii.